Here is an 805-residue protein sequence, read N- to C-terminus: Ubiquitin carboxyl-terminal hydrolase 10 (805 aa).

The disordered stretch occupies residues 139–170 (DGSGNADSDGTSGTGQRERKKKKKRPPGYYSY). Residues 143-153 (NADSDGTSGTG) are compositionally biased toward polar residues. A USP domain is found at 422–802 (RGLINKGNWC…TAYLLYYRRV (381 aa)). The active-site Nucleophile is Cys-431. The tract at residues 561–593 (HINNGPDPVSEKEEINKDEQEGSDEEWEQVGPR) is disordered. A compositionally biased stretch (basic and acidic residues) spans 569–580 (VSEKEEINKDEQ). Catalysis depends on His-756, which acts as the Proton acceptor.

This sequence belongs to the peptidase C19 family. USP10 subfamily.

The protein localises to the cytoplasm. The protein resides in the nucleus. It catalyses the reaction Thiol-dependent hydrolysis of ester, thioester, amide, peptide and isopeptide bonds formed by the C-terminal Gly of ubiquitin (a 76-residue protein attached to proteins as an intracellular targeting signal).. Functionally, hydrolase that can remove conjugated ubiquitin from target proteins such as p53/tp53, rps2/us5, rps3/us3, rps10/eS10, becn1, snx3 and cftr. Acts as an essential regulator of p53/tp53 stability: in unstressed cells, specifically deubiquitinates p53/tp53 in the cytoplasm, leading to counteracts MDM2 action and stabilize p53/tp53. Following DNA damage, translocates to the nucleus and deubiquitinates p53/tp53, leading to regulate the p53/TP53-dependent DNA damage response. Component of a regulatory loop that controls autophagy and p53/tp53 levels. Plays a key role in 40S ribosome subunit recycling when a ribosome has stalled during translation: acts both by inhibiting formation of stress granules, which store stalled translation pre-initiation complexes, and mediating deubiquitination of 40S ribosome subunits. Deubiquitinates cftr in early endosomes, enhancing its endocytic recycling. This chain is Ubiquitin carboxyl-terminal hydrolase 10 (usp10), found in Xenopus tropicalis (Western clawed frog).